Consider the following 381-residue polypeptide: Meiotic recombination protein SPO11-1 (381 aa).

The Topo IIA-type catalytic domain occupies 23–162; it reads EEAATLLHRI…LNVVPVAKGL (140 aa). Y123 acts as the O-(5'-phospho-DNA)-tyrosine intermediate in catalysis. Residues E209 and D261 each contribute to the Mg(2+) site.

It belongs to the TOP6A family. It depends on Mg(2+) as a cofactor. Highly expressed in flowers before pollination. Expressed in roots and shoots.

It localises to the nucleus. It catalyses the reaction ATP-dependent breakage, passage and rejoining of double-stranded DNA.. Its function is as follows. Required for meiotic recombination. Mediates DNA cleavage that forms the double-strand breaks (DSB) that initiate meiotic recombination. May be involved in plant growth and development, and stress tolerance. The polypeptide is Meiotic recombination protein SPO11-1 (SPO11-1) (Oryza sativa subsp. indica (Rice)).